Here is a 160-residue protein sequence, read N- to C-terminus: 6,7-dimethyl-8-ribityllumazine synthase (160 aa).

Residues W27, A59 to E61, and V81 to I83 each bind 5-amino-6-(D-ribitylamino)uracil. E86–T87 contacts (2S)-2-hydroxy-3-oxobutyl phosphate. Catalysis depends on H89, which acts as the Proton donor. N114 serves as a coordination point for 5-amino-6-(D-ribitylamino)uracil. R128 contributes to the (2S)-2-hydroxy-3-oxobutyl phosphate binding site.

This sequence belongs to the DMRL synthase family. Homopentamer.

The enzyme catalyses (2S)-2-hydroxy-3-oxobutyl phosphate + 5-amino-6-(D-ribitylamino)uracil = 6,7-dimethyl-8-(1-D-ribityl)lumazine + phosphate + 2 H2O + H(+). The protein operates within cofactor biosynthesis; riboflavin biosynthesis; riboflavin from 2-hydroxy-3-oxobutyl phosphate and 5-amino-6-(D-ribitylamino)uracil: step 1/2. In terms of biological role, catalyzes the formation of 6,7-dimethyl-8-ribityllumazine by condensation of 5-amino-6-(D-ribitylamino)uracil with 3,4-dihydroxy-2-butanone 4-phosphate. This is the penultimate step in the biosynthesis of riboflavin. This Mycobacterium ulcerans (strain Agy99) protein is 6,7-dimethyl-8-ribityllumazine synthase.